Reading from the N-terminus, the 274-residue chain is Diaminopimelate epimerase (274 aa).

The substrate site is built by asparagine 11 and asparagine 60. Cysteine 69 acts as the Proton donor in catalysis. Substrate is bound by residues glycine 70 to asparagine 71, asparagine 191, and glutamate 209 to arginine 210. Catalysis depends on cysteine 218, which acts as the Proton acceptor. Glycine 219–serine 220 is a binding site for substrate.

The protein belongs to the diaminopimelate epimerase family. Homodimer.

The protein localises to the cytoplasm. The catalysed reaction is (2S,6S)-2,6-diaminopimelate = meso-2,6-diaminopimelate. It functions in the pathway amino-acid biosynthesis; L-lysine biosynthesis via DAP pathway; DL-2,6-diaminopimelate from LL-2,6-diaminopimelate: step 1/1. Catalyzes the stereoinversion of LL-2,6-diaminopimelate (L,L-DAP) to meso-diaminopimelate (meso-DAP), a precursor of L-lysine and an essential component of the bacterial peptidoglycan. This chain is Diaminopimelate epimerase, found in Caldanaerobacter subterraneus subsp. tengcongensis (strain DSM 15242 / JCM 11007 / NBRC 100824 / MB4) (Thermoanaerobacter tengcongensis).